A 92-amino-acid polypeptide reads, in one-letter code: C-C motif chemokine 4 (92 aa).

A signal peptide spans 1 to 23; that stretch reads MKLGVTVLSVALLVAALCPPALS. Disulfide bonds link cysteine 34–cysteine 58 and cysteine 35–cysteine 74.

The protein belongs to the intercrine beta (chemokine CC) family. As to quaternary structure, homodimer.

The protein resides in the secreted. Functionally, monokine with inflammatory and chemokinetic properties. The polypeptide is C-C motif chemokine 4 (CCL4) (Oryctolagus cuniculus (Rabbit)).